Here is a 222-residue protein sequence, read N- to C-terminus: N-(5'-phosphoribosyl)anthranilate isomerase (222 aa).

It belongs to the TrpF family.

It catalyses the reaction N-(5-phospho-beta-D-ribosyl)anthranilate = 1-(2-carboxyphenylamino)-1-deoxy-D-ribulose 5-phosphate. It functions in the pathway amino-acid biosynthesis; L-tryptophan biosynthesis; L-tryptophan from chorismate: step 3/5. The polypeptide is N-(5'-phosphoribosyl)anthranilate isomerase (Gloeobacter violaceus (strain ATCC 29082 / PCC 7421)).